A 221-amino-acid polypeptide reads, in one-letter code: Riboflavin kinase (221 aa).

An H-T-H motif-like region spans residues Met-1–Glu-89. The segment at Leu-90 to Leu-221 is riboflavin kinase. Residue Gly-99–Lys-104 participates in CDP binding. The Mg(2+) site is built by Thr-128 and Asn-130. Ser-185 and Glu-192 together coordinate FMN. CDP is bound at residue Lys-197–Arg-200.

This sequence belongs to the archaeal riboflavin kinase family. Mg(2+) is required as a cofactor.

It catalyses the reaction riboflavin + CTP = CDP + FMN + H(+). It participates in cofactor biosynthesis; FMN biosynthesis; FMN from riboflavin (CTP route): step 1/1. Functionally, catalyzes the CTP-dependent phosphorylation of riboflavin (vitamin B2) to form flavin mononucleotide (FMN). The sequence is that of Riboflavin kinase (ribK) from Picrophilus torridus (strain ATCC 700027 / DSM 9790 / JCM 10055 / NBRC 100828 / KAW 2/3).